A 1292-amino-acid polypeptide reads, in one-letter code: MENQQKQLQQGVPELASLAGREESSVRGIDLMRVDQCEEIGVNQVPALSVPASTVAGAVAVPMSNEQEVKVIDEAAPIKRKRGRPPRAQANTPLHIRPPPPPPKKEDKEEDVCFICFDGGDLVLCDRRNCPKAYHPACIKRDEAFFRTTAKWNCGWHICGTCQKASSYMCYTCTFSVCKRCIKDADYVIVRGNMGLCGTCIKPIMLIENIAQGDNEAVKVDFDDKLSWEYLFKVYWLCLKEELSLTVDELTRANNPWKEVPNTAPKVESQNDHTNNRALDVAVNGTKRRRTSDSPTLPNKLDGKNPSNILKKAPGDTSWATKELLEFVSFMKNGDTSVLSQFDVQGLLLDYIKKKNLRDPLQKSQVLCDQMLVKLFGKQRVGHFEMLKLLESHVLIQEKPKGAKTTNGETTHAVPSQIEEDSVHDPMVRDRRRKMRRKTDGRVQNENLDAYAAIDVHNINLIYLRRKFLESLLDDINKVDEKVVGTILRIKVSGSDQKLDIHRLVQVVGTSKAIASYQLGAKTTDVMLEILNLDKREVISIDQLSDQNITEDECKRLRQSIKCGLNKRLTVVDILKTAATLQAMRINEALEAEILKLNHLRDRAKKLELLKSPEERQRLLQEVPEVHTDPSMDPSHALSEDAGLGTRKQDNHVKAQSKGPQNKGVNLNNVGNNVQKKYDAPILRSRNNVHADKDDCSKVHNNSSNIQETGKDDEESEIWHYRDPTGKTQGPFSMVQLRRWKSSGHFPPYLRIWRAHENQDESVLLTDALAGRFDKATTLPSSSSLPQELKPSPHDSGRTGADVNCLQKNQMPVNTSATSSSSSTVTAHSNDPKEKQVVALVACSGKVEDGNSVRPQPQVSCPASISVVPGHVVTPDVRETPGTDQYNTVRADGNHNTTKTLEDETNGGSVSINGSVHAPNLNQESHFLDFPSPTPKSSPEDLEAQAAETIQSLSSCVLVKGPSGVTWSTTTTSTTDAATTTSSVVVTGGQLPQVIQQNTVVLAAPSVKPIELAADHATATQTSDNTQVAQASGWPAIVADPDECDESVSDLLAEVEAMEQNGLPSSPTSTFHCDDDDDLKGPEKDFFNPVARMSLTPETCRLDVSQTSILDNVSAGKSSMLTEAKDNTPFSHCGTAGPELLLFAPPPPPPTAISHDLTLTTTALRLGSETTVEAGTVERLPKSVLGVSSEPSPRSLSSHDSSSARGSTERSPRVSQPKRSSGHSRDRQWLNNGHNSSFNNSHNNRQWPYSNSHGYDHGSGSYAAHPPKGLKICKFYESGYCKRGASCSFWHP.

A compositionally biased stretch (polar residues) spans 1–10 (MENQQKQLQQ). Disordered regions lie at residues 1-24 (MENQQKQLQQGVPELASLAGREES) and 72-107 (IDEAAPIKRKRGRPPRAQANTPLHIRPPPPPPKKED). The PHD-type zinc finger occupies 110–176 (EDVCFICFDG…SYMCYTCTFS (67 aa)). 2 disordered regions span residues 256–313 (PWKE…LKKA) and 401–426 (KGAKTTNGETTHAVPSQIEEDSVHDP). The region spanning 313–396 (APGDTSWATK…LKLLESHVLI (84 aa)) is the SWIB/MDM2 domain. Polar residues predominate over residues 404-414 (KTTNGETTHAV). Residues 453-586 (AIDVHNINLI…TAATLQAMRI (134 aa)) form the Plus3 domain. 4 disordered regions span residues 624-731 (PEVH…TQGP), 777-832 (TTLP…SNDP), 876-915 (DVRETPGTDQYNTVRADGNHNTTKTLEDETNGGSVSINGS), and 1170-1245 (TTVE…HNNR). A compositionally biased stretch (low complexity) spans 661-675 (QNKGVNLNNVGNNVQ). The segment covering 689-698 (VHADKDDCSK) has biased composition (basic and acidic residues). The segment covering 699-708 (VHNNSSNIQE) has biased composition (polar residues). Residues 716-770 (SEIWHYRDPTGKTQGPFSMVQLRRWKSSGHFPPYLRIWRAHENQDESVLLTDALA) enclose the GYF domain. Over residues 813-829 (VNTSATSSSSSTVTAHS) the composition is skewed to low complexity. 2 stretches are compositionally biased toward polar residues: residues 882-899 (GTDQYNTVRADGNHNTTK) and 906-915 (NGGSVSINGS). Composition is skewed to low complexity over residues 1188-1206 (SSEPSPRSLSSHDSSSARG) and 1231-1244 (NNGHNSSFNNSHNN). Residues 1267–1292 (PKGLKICKFYESGYCKRGASCSFWHP) form a C3H1-type zinc finger.

This chain is Zinc finger CCCH domain-containing protein 44, found in Arabidopsis thaliana (Mouse-ear cress).